The primary structure comprises 448 residues: Probable glycine dehydrogenase (decarboxylating) subunit 1 (448 aa).

The protein belongs to the GcvP family. N-terminal subunit subfamily. The glycine cleavage system is composed of four proteins: P, T, L and H. In this organism, the P 'protein' is a heterodimer of two subunits.

The catalysed reaction is N(6)-[(R)-lipoyl]-L-lysyl-[glycine-cleavage complex H protein] + glycine + H(+) = N(6)-[(R)-S(8)-aminomethyldihydrolipoyl]-L-lysyl-[glycine-cleavage complex H protein] + CO2. In terms of biological role, the glycine cleavage system catalyzes the degradation of glycine. The P protein binds the alpha-amino group of glycine through its pyridoxal phosphate cofactor; CO(2) is released and the remaining methylamine moiety is then transferred to the lipoamide cofactor of the H protein. In Listeria monocytogenes serovar 1/2a (strain ATCC BAA-679 / EGD-e), this protein is Probable glycine dehydrogenase (decarboxylating) subunit 1.